A 446-amino-acid polypeptide reads, in one-letter code: Tol-Pal system protein TolB (446 aa).

An N-terminal signal peptide occupies residues 1–19 (MLLRYLFILFIIIPIKAFA).

Belongs to the TolB family. In terms of assembly, the Tol-Pal system is composed of five core proteins: the inner membrane proteins TolA, TolQ and TolR, the periplasmic protein TolB and the outer membrane protein Pal. They form a network linking the inner and outer membranes and the peptidoglycan layer.

It localises to the periplasm. Functionally, part of the Tol-Pal system, which plays a role in outer membrane invagination during cell division and is important for maintaining outer membrane integrity. The protein is Tol-Pal system protein TolB of Pelagibacter ubique (strain HTCC1062).